A 103-amino-acid polypeptide reads, in one-letter code: Large ribosomal subunit protein bL21 (103 aa).

It belongs to the bacterial ribosomal protein bL21 family. In terms of assembly, part of the 50S ribosomal subunit. Contacts protein L20.

Its function is as follows. This protein binds to 23S rRNA in the presence of protein L20. This is Large ribosomal subunit protein bL21 from Leptothrix cholodnii (strain ATCC 51168 / LMG 8142 / SP-6) (Leptothrix discophora (strain SP-6)).